A 565-amino-acid polypeptide reads, in one-letter code: Perivitellin-2 67 kDa subunit (565 aa).

An N-terminal signal peptide occupies residues 1–26; sequence MSQLRWWVVSQLLLLIVVCILDHSEG. In terms of domain architecture, MACPF spans 27-340; that stretch reads ARVCPKIVPG…AKVANLDRLT (314 aa).

In terms of assembly, perivitellin-2 is a heterooctamer of 4 identical 98 kDa heterodimers, each composed of one 31 kDa and one 67 kDa subunits. The 98 kDa heterodimer subunits are held together by disulfide bridges while the heterodimers are assembled into the native perivitellin-2 octamer by non-covalent forces. Post-translationally, glycosylated. Contains four O-linked and one N-linked oligosaccharide bonds. The protein contains 2.5% of carbohydrates (high levels of mannose, galactose, and NAcGlucosamine, and small amounts of NacGalactosamine). In terms of processing, PV2 is a very high density lipoprotein (VHDL). It contains 3.75% of lipids. The major lipid classes are free sterols and phospholipids and also have significant quantities of energy-providing triacylglycerides and free fatty acids. In terms of tissue distribution, produced by albumen secretory cells. Found in developing eggs.

Its subcellular location is the secreted. It localises to the target cell membrane. The egg defensive protein perivitellin-2 is a pore-forming two-subunit glycoprotein that affects both the nervous and digestive systems of mammals. In addition, it is a source of both structural and energetic molecules during embryonic development. The tachylectin subunit (31 kDa) binds target membranes while the MACPF subunit (67 kDa) disrupts lipid bilayers forming large pores altering the plasma membrance conductance. Both in vivo and in vitro, the protein shows wide pH range stability and is resistant to enzymatic proteolysis from gastrointestinal environments. It specifically binds mature enterocytes but does not cause cell disruption on caco-2 (human colorectal adenocarcinoma cells) or rat intestinal cells. After oral administration to mice, it binds enterocytes and induces large dose-dependent morphological changes on their small intestine mucosa, reducing the absorptive surface. Additionally, it is detected in the Peyer's patches where it activates lymphoid follicles and triggers apoptosis. The toxin can also traverse the intestinal barrier and induce oral adaptive immunity with evidence of circulating antibody response. The toxin also shows hemagglutination properties thanks to the tachylectin subunit, but does not show hemolytic activity. In addition to enterotoxin activity, the toxin also acts as a neurotoxin, since an intraperitoneal injection induces paralysis of the mice rear limbs, followed by death. The protein is Perivitellin-2 67 kDa subunit of Pomacea canaliculata (Golden apple snail).